Reading from the N-terminus, the 113-residue chain is Large ribosomal subunit protein uL22 (113 aa).

Belongs to the universal ribosomal protein uL22 family. Part of the 50S ribosomal subunit.

Functionally, this protein binds specifically to 23S rRNA; its binding is stimulated by other ribosomal proteins, e.g. L4, L17, and L20. It is important during the early stages of 50S assembly. It makes multiple contacts with different domains of the 23S rRNA in the assembled 50S subunit and ribosome. The globular domain of the protein is located near the polypeptide exit tunnel on the outside of the subunit, while an extended beta-hairpin is found that lines the wall of the exit tunnel in the center of the 70S ribosome. This chain is Large ribosomal subunit protein uL22, found in Halothermothrix orenii (strain H 168 / OCM 544 / DSM 9562).